Here is a 282-residue protein sequence, read N- to C-terminus: ATP synthase gamma chain (282 aa).

This sequence belongs to the ATPase gamma chain family. As to quaternary structure, F-type ATPases have 2 components, CF(1) - the catalytic core - and CF(0) - the membrane proton channel. CF(1) has five subunits: alpha(3), beta(3), gamma(1), delta(1), epsilon(1). CF(0) has three main subunits: a, b and c.

It is found in the cell membrane. Produces ATP from ADP in the presence of a proton gradient across the membrane. The gamma chain is believed to be important in regulating ATPase activity and the flow of protons through the CF(0) complex. The sequence is that of ATP synthase gamma chain from Clostridium botulinum (strain Langeland / NCTC 10281 / Type F).